The primary structure comprises 351 residues: uncharacterized protein (351 aa).

Positions 215, 226, 290, 319, and 333 each coordinate Mn(2+).

This sequence belongs to the peptidase M24B family. The cofactor is Mn(2+).

This is an uncharacterized protein from Staphylococcus aureus (strain bovine RF122 / ET3-1).